Here is a 289-residue protein sequence, read N- to C-terminus: Glyceraldehyde-3-phosphate dehydrogenase (289 aa).

Residues Asp-12 and Arg-57 each contribute to the NAD(+) site. D-glyceraldehyde 3-phosphate-binding positions include 128–130 (SCT), Thr-159, 188–189 (TG), and Arg-211. Cys-129 (nucleophile) is an active-site residue.

Belongs to the glyceraldehyde-3-phosphate dehydrogenase family. In terms of assembly, homotetramer.

Its subcellular location is the cytoplasm. It carries out the reaction D-glyceraldehyde 3-phosphate + phosphate + NAD(+) = (2R)-3-phospho-glyceroyl phosphate + NADH + H(+). The protein operates within carbohydrate degradation; glycolysis; pyruvate from D-glyceraldehyde 3-phosphate: step 1/5. This is Glyceraldehyde-3-phosphate dehydrogenase (GPD) from Amanita muscaria (Fly agaric).